The following is a 276-amino-acid chain: Sec-independent protein translocase protein TatC (276 aa).

The segment at 1–29 is disordered; sequence MVSLTSVPPYADATPDTRASSGPAPGRRK. 6 helical membrane passes run 49–69, 103–123, 136–156, 187–207, 221–241, and 242–262; these read GGLV…LVLL, LFLA…AFVT, GFLG…WWVL, LVLA…LNLA, WAVL…DALT, and MVLV…VAVW.

This sequence belongs to the TatC family. The Tat system comprises two distinct complexes: a TatABC complex, containing multiple copies of TatA, TatB and TatC subunits, and a separate TatA complex, containing only TatA subunits. Substrates initially bind to the TatABC complex, which probably triggers association of the separate TatA complex to form the active translocon.

The protein localises to the cell membrane. Functionally, part of the twin-arginine translocation (Tat) system that transports large folded proteins containing a characteristic twin-arginine motif in their signal peptide across membranes. Together with TatB, TatC is part of a receptor directly interacting with Tat signal peptides. This Xylanimonas cellulosilytica (strain DSM 15894 / JCM 12276 / CECT 5975 / KCTC 9989 / LMG 20990 / NBRC 107835 / XIL07) protein is Sec-independent protein translocase protein TatC.